The following is a 479-amino-acid chain: Poly(A) polymerase catalytic subunit (479 aa).

Residues Asp202 and Asp204 contribute to the active site. The Ca(2+) site is built by Asp202, Asp204, and Asp253.

Belongs to the poxviridae poly(A) polymerase catalytic subunit family. Heterodimer of a large (catalytic) subunit and a small (regulatory) subunit.

It carries out the reaction RNA(n) + ATP = RNA(n)-3'-adenine ribonucleotide + diphosphate. Functionally, polymerase that creates the 3'-poly(A) tail of mRNA's. This chain is Poly(A) polymerase catalytic subunit (OPG063), found in Bos taurus (Bovine).